Here is a 234-residue protein sequence, read N- to C-terminus: Lipoprotein-releasing system ATP-binding protein LolD (234 aa).

Positions 7–234 constitute an ABC transporter domain; it reads LLCNNLCKKY…QDELTVTGAL (228 aa). 43 to 50 serves as a coordination point for ATP; sequence GSSGSGKS.

This sequence belongs to the ABC transporter superfamily. Lipoprotein translocase (TC 3.A.1.125) family. In terms of assembly, the complex is composed of two ATP-binding proteins (LolD) and two transmembrane proteins (LolC and LolE).

It localises to the cell inner membrane. In terms of biological role, part of the ABC transporter complex LolCDE involved in the translocation of mature outer membrane-directed lipoproteins, from the inner membrane to the periplasmic chaperone, LolA. Responsible for the formation of the LolA-lipoprotein complex in an ATP-dependent manner. The sequence is that of Lipoprotein-releasing system ATP-binding protein LolD from Photorhabdus laumondii subsp. laumondii (strain DSM 15139 / CIP 105565 / TT01) (Photorhabdus luminescens subsp. laumondii).